The chain runs to 803 residues: Nuclear factor of activated T-cells, cytoplasmic 1 (803 aa).

A calcineurin-binding region spans residues 101-106; that stretch reads PRIEIT. Positions 109 to 199 are transactivation domain A (TAD-A); sequence LGLHHNSSQF…CVSPKTTDPE (91 aa). Polar residues predominate over residues 181 to 195; sequence PQTSPWQSPCVSPKT. Residues 181–279 are disordered; the sequence is PQTSPWQSPC…GSPRVSVTDD (99 aa). 2 repeat units span residues 184 to 200 and 214 to 230. The tract at residues 184–279 is 3 X SP repeats; the sequence is SPWQSPCVSP…GSPRVSVTDD (96 aa). Phosphoserine is present on residues Ser214 and Ser218. The segment covering 214–231 has biased composition (low complexity); the sequence is SPRHSPSTSPRTSVTEES. Ser226 is subject to Phosphoserine; by PKA. A Nuclear localization signal motif is present at residues 246 to 248; sequence KRK. Repeat 3 spans residues 263–279; that stretch reads SPTPSPQGSPRVSVTDD. At Ser275 the chain carries Phosphoserine; by PKA. The short motif at 291–302 is the Nuclear export signal element; the sequence is SAIVAAINALST. Positions 389–571 constitute an RHD domain; it reads PSLPALDWQL…NPIECSQRSA (183 aa). The DNA-binding element occupies 418 to 425; the sequence is RAHYETEG. The short motif at 661–663 is the Nuclear localization signal element; it reads KRK. Positions 723-803 are disordered; it reads LMPGFPPRPQ…QPQVSPTSSG (81 aa). Over residues 778 to 792 the composition is skewed to pro residues; sequence SGVPPGPPQPPPPTL. Residues 793 to 803 show a composition bias toward low complexity; that stretch reads LQPQVSPTSSG.

As to quaternary structure, member of the multicomponent NFATC transcription complex that consists of at least two components, a pre-existing cytoplasmic component NFATC2 and an inducible nuclear component NFATC1. Other members such as NFATC4, NFATC3 or members of the activating protein-1 family, MAF, GATA4 and Cbp/p300 can also bind the complex. NFATC proteins bind to DNA as monomers. Interacts with HOMER2 and HOMER3; this interaction may compete with calcineurin/PPP3CA-binding and hence prevent NFATC1 dephosphorylation and activation. Interacts with TLE6/GRG6. Post-translationally, phosphorylated by NFATC-kinase and GSK3B; phosphorylation induces NFATC1 nuclear exit and dephosphorylation by calcineurin promotes nuclear import. Phosphorylation by PKA and DYRK2 negatively modulates nuclear accumulation, and promotes subsequent phosphorylation by GSK3B or casein kinase 1.

It localises to the cytoplasm. The protein localises to the nucleus. Plays a role in the inducible expression of cytokine genes in T-cells, especially in the induction of the IL-2 or IL-4 gene transcription. Also controls gene expression in embryonic cardiac cells. Could regulate not only the activation and proliferation but also the differentiation and programmed death of T-lymphocytes as well as lymphoid and non-lymphoid cells. Required for osteoclastogenesis and regulates many genes important for osteoclast differentiation and function. The sequence is that of Nuclear factor of activated T-cells, cytoplasmic 1 from Bos taurus (Bovine).